The following is a 351-amino-acid chain: Transmembrane protein 115 (351 aa).

Topologically, residues 1-19 are cytoplasmic; it reads MQRALPGARQHLGAILSSA. A mediates homooligomerization region spans residues 1–205; that stretch reads MQRALPGARQ…FGLISSWVYL (205 aa). Residues 20-40 traverse the membrane as a helical segment; it reads SVVVKALCAAVLFLYLLSFAV. The Lumenal portion of the chain corresponds to 41–97; the sequence is DTGCLAVTPGYLFPPNFWIWTLATHGLMEQHVWDVAISLATVVVAGRLLEPLWGALE. Residues 98–118 traverse the membrane as a helical segment; the sequence is LLIFFSVVNVSVGLLGAFAYL. Residues 119 to 126 are Cytoplasmic-facing; that stretch reads LTYMASFN. A helical transmembrane segment spans residues 127-147; that stretch reads LVYLFTVRIHGALGFLGGVLV. At 148-165 the chain is on the lumenal side; the sequence is ALKQTMGDCVVLRVPQVR. A helical membrane pass occupies residues 166–186; it reads VSVVPMLLLGLLLLLRLATLL. Topologically, residues 187–351 are cytoplasmic; that stretch reads QSPALASYGF…ITFEAAPPTL (165 aa). A mediates localization to the Golgi region spans residues 206–229; the sequence is RFYQRHSRGRGDMADHFAFATFFP. Positions 300 to 351 are disordered; that stretch reads DQSVWPSMDDDEEEAGAKVDSPMPSDKAPTLPGKGAVPESSLITFEAAPPTL. Thr329 bears the Phosphothreonine mark.

The protein belongs to the TMEM115 family. As to quaternary structure, homooligomer. Interacts with COPB1. May interact with LMAN1. Interacts with the COG complex; probably through COG3.

The protein resides in the golgi apparatus. The protein localises to the golgi stack membrane. May play a role in retrograde transport of proteins from the Golgi to the endoplasmic reticulum. May indirectly play a role in protein glycosylation in the Golgi. This chain is Transmembrane protein 115, found in Bos taurus (Bovine).